The primary structure comprises 144 residues: Large ribosomal subunit protein uL13 (144 aa).

It belongs to the universal ribosomal protein uL13 family. In terms of assembly, part of the 50S ribosomal subunit.

Its function is as follows. This protein is one of the early assembly proteins of the 50S ribosomal subunit, although it is not seen to bind rRNA by itself. It is important during the early stages of 50S assembly. This chain is Large ribosomal subunit protein uL13, found in Clostridium acetobutylicum (strain ATCC 824 / DSM 792 / JCM 1419 / IAM 19013 / LMG 5710 / NBRC 13948 / NRRL B-527 / VKM B-1787 / 2291 / W).